Consider the following 993-residue polypeptide: Chromosome transmission fidelity protein 18 (993 aa).

Disordered stretches follow at residues 1-52 (MPFI…DHDG) and 65-107 (FEIQ…DGLE). Composition is skewed to acidic residues over residues 42–51 (LDDDDDDDHD) and 97–106 (DNDDDDDDGL). 321-328 (GPPGLGKT) provides a ligand contact to ATP. The tract at residues 887-915 (RKNSENLSSTGSKKSTTKSDDIETPANPA) is disordered.

Belongs to the activator 1 small subunits family. CTF18 subfamily.

Its subcellular location is the nucleus. Its function is as follows. Essential for the fidelity of chromosome transmission. Required for the DNA replication block checkpoint. Replication factor C (RFC) complex has an essential but redundant activity in sister chromatid cohesion establishment. This chain is Chromosome transmission fidelity protein 18 (ctf18), found in Emericella nidulans (strain FGSC A4 / ATCC 38163 / CBS 112.46 / NRRL 194 / M139) (Aspergillus nidulans).